We begin with the raw amino-acid sequence, 482 residues long: Putative metallophosphoesterase F40B5.2 (482 aa).

Transmembrane regions (helical) follow at residues 15–35 (MNLKLKIAIIVIGFIHVSIAI), 129–149 (ALMMLFLFLSHIAMFFYYIFL), 156–176 (IAITSLSFIAAYAHILIFLLI), and 205–225 (CYHILLALILGFIFMFAGLYT). D256, H258, D288, N319, H421, and H423 together coordinate a divalent metal cation.

Belongs to the metallophosphoesterase superfamily. LOC643853 family.

The protein resides in the membrane. The sequence is that of Putative metallophosphoesterase F40B5.2 from Caenorhabditis elegans.